Here is a 131-residue protein sequence, read N- to C-terminus: MKKTPLLNSSICEVVSKMGHTDMIAIGDSGLPIPDDTKRIDLALIKGVPTFMQTLKAVLLEQQVEEVIIAHETKEVSPETFENIKKEIGDVKITFISHEELKKELSNCKAVIRTGEQTPYANIILKSGVVF.

The active-site Proton donor is the His20. Substrate is bound by residues Asp28, His98, and 120–122 (YAN).

This sequence belongs to the RbsD / FucU family. RbsD subfamily. As to quaternary structure, homodecamer.

Its subcellular location is the cytoplasm. It catalyses the reaction beta-D-ribopyranose = beta-D-ribofuranose. Its pathway is carbohydrate metabolism; D-ribose degradation; D-ribose 5-phosphate from beta-D-ribopyranose: step 1/2. Catalyzes the interconversion of beta-pyran and beta-furan forms of D-ribose. The sequence is that of D-ribose pyranase from Clostridium novyi (strain NT).